A 304-amino-acid chain; its full sequence is Quinolinate synthase (304 aa).

Iminosuccinate-binding residues include H23 and S40. Residue C85 coordinates [4Fe-4S] cluster. Residues 111-113 (YIN) and S128 contribute to the iminosuccinate site. Position 171 (C171) interacts with [4Fe-4S] cluster. Residues 197–199 (HPE) and T214 contribute to the iminosuccinate site. C259 is a [4Fe-4S] cluster binding site.

This sequence belongs to the quinolinate synthase family. Type 2 subfamily. Requires [4Fe-4S] cluster as cofactor.

Its subcellular location is the cytoplasm. It carries out the reaction iminosuccinate + dihydroxyacetone phosphate = quinolinate + phosphate + 2 H2O + H(+). It participates in cofactor biosynthesis; NAD(+) biosynthesis; quinolinate from iminoaspartate: step 1/1. Its function is as follows. Catalyzes the condensation of iminoaspartate with dihydroxyacetone phosphate to form quinolinate. The sequence is that of Quinolinate synthase from Clostridioides difficile (strain 630) (Peptoclostridium difficile).